Consider the following 351-residue polypeptide: Nicotinate-nucleotide--dimethylbenzimidazole phosphoribosyltransferase (351 aa).

The active-site Proton acceptor is the E317.

This sequence belongs to the CobT family.

The enzyme catalyses 5,6-dimethylbenzimidazole + nicotinate beta-D-ribonucleotide = alpha-ribazole 5'-phosphate + nicotinate + H(+). It participates in nucleoside biosynthesis; alpha-ribazole biosynthesis; alpha-ribazole from 5,6-dimethylbenzimidazole: step 1/2. Functionally, catalyzes the synthesis of alpha-ribazole-5'-phosphate from nicotinate mononucleotide (NAMN) and 5,6-dimethylbenzimidazole (DMB). The chain is Nicotinate-nucleotide--dimethylbenzimidazole phosphoribosyltransferase from Pseudomonas putida (strain ATCC 700007 / DSM 6899 / JCM 31910 / BCRC 17059 / LMG 24140 / F1).